The primary structure comprises 746 residues: Hyperosmolality-gated Ca2+ permeable channel 2.1 (746 aa).

10 consecutive transmembrane segments (helical) span residues 3–23 (ISALLTSAGINISICIVLLSL), 90–110 (MVIFSIRIFFIVAVICIAFVL), 144–164 (LWVHCLALYIITSAACLLLYF), 357–377 (IATLVGAVAFMFVFLIPVTFI), 405–425 (VITGYLPSVILILFFYAVPPL), 445–465 (ACIKVLYFTIWNVFFVNILSG), 492–512 (AGFFMTYCFTSGWASLACEIM), 560–580 (VIAPLILPFLLIYFFLAYLIY), 601–621 (IFHNTTIFSLILTQIIALGFF), and 623–643 (LKLSTVASGFTIPLILLTLLF). Over residues 692–702 (LHSQKSSSKAE) the composition is skewed to polar residues. A disordered region spans residues 692-723 (LHSQKSSSKAECSNPFKKQELPDPEKLKPEEG). Positions 708-723 (KKQELPDPEKLKPEEG) are enriched in basic and acidic residues.

This sequence belongs to the CSC1 (TC 1.A.17) family.

It localises to the membrane. Acts as an osmosensitive calcium-permeable cation channel. This chain is Hyperosmolality-gated Ca2+ permeable channel 2.1, found in Arabidopsis thaliana (Mouse-ear cress).